We begin with the raw amino-acid sequence, 360 residues long: Chorismate synthase (360 aa).

Arg-48 and Arg-54 together coordinate NADP(+). Residues Arg-125–Ser-127, Asn-246–Ala-247, Gly-286, Lys-301–Ser-305, and Arg-327 contribute to the FMN site.

This sequence belongs to the chorismate synthase family. As to quaternary structure, homotetramer. FMNH2 serves as cofactor.

It carries out the reaction 5-O-(1-carboxyvinyl)-3-phosphoshikimate = chorismate + phosphate. The protein operates within metabolic intermediate biosynthesis; chorismate biosynthesis; chorismate from D-erythrose 4-phosphate and phosphoenolpyruvate: step 7/7. Functionally, catalyzes the anti-1,4-elimination of the C-3 phosphate and the C-6 proR hydrogen from 5-enolpyruvylshikimate-3-phosphate (EPSP) to yield chorismate, which is the branch point compound that serves as the starting substrate for the three terminal pathways of aromatic amino acid biosynthesis. This reaction introduces a second double bond into the aromatic ring system. The chain is Chorismate synthase from Actinobacillus pleuropneumoniae serotype 5b (strain L20).